The following is a 422-amino-acid chain: Zinc finger protein 550 (422 aa).

Positions 12–83 constitute a KRAB domain; the sequence is VTFKDVAVTF…KRGLSHATCA (72 aa). The interval 113–158 is disordered; that stretch reads LESSTSSDSRLGRARDEEGLLEMQKGKVTPETDLHKETHLGKVSLE. Positions 122-152 are enriched in basic and acidic residues; sequence RLGRARDEEGLLEMQKGKVTPETDLHKETHL. 8 C2H2-type zinc fingers span residues 203 to 225, 231 to 253, 259 to 281, 287 to 309, 315 to 337, 343 to 365, 371 to 393, and 399 to 421; these read YKCK…QRVH, YECN…YLIH, YKCL…HPIH, YECS…NRTH, FECK…YIIH, YDCM…QRIH, YECT…SVIH, and YKCI…QRVH.

The protein belongs to the krueppel C2H2-type zinc-finger protein family.

Its subcellular location is the nucleus. Its function is as follows. May be involved in transcriptional regulation. In Homo sapiens (Human), this protein is Zinc finger protein 550 (ZNF550).